The primary structure comprises 275 residues: NH(3)-dependent NAD(+) synthetase (275 aa).

46–53 is an ATP binding site; that stretch reads GISGGQDS. Asp52 serves as a coordination point for Mg(2+). Residue Arg140 participates in deamido-NAD(+) binding. Residue Thr160 coordinates ATP. A Mg(2+)-binding site is contributed by Glu165. Residues Lys173 and Asp180 each contribute to the deamido-NAD(+) site. ATP-binding residues include Lys189 and Thr211. 260–261 is a deamido-NAD(+) binding site; it reads HK.

Belongs to the NAD synthetase family. As to quaternary structure, homodimer.

It carries out the reaction deamido-NAD(+) + NH4(+) + ATP = AMP + diphosphate + NAD(+) + H(+). It functions in the pathway cofactor biosynthesis; NAD(+) biosynthesis; NAD(+) from deamido-NAD(+) (ammonia route): step 1/1. In terms of biological role, catalyzes the ATP-dependent amidation of deamido-NAD to form NAD. Uses ammonia as a nitrogen source. This Salmonella agona (strain SL483) protein is NH(3)-dependent NAD(+) synthetase.